Reading from the N-terminus, the 98-residue chain is uncharacterized protein (98 aa).

This is an uncharacterized protein from Methanocaldococcus jannaschii (strain ATCC 43067 / DSM 2661 / JAL-1 / JCM 10045 / NBRC 100440) (Methanococcus jannaschii).